A 251-amino-acid chain; its full sequence is WUSCHEL-related homeobox 4 (251 aa).

Disordered regions lie at residues M1 to S21 and L33 to P93. The span at S11–S21 shows a compositional bias: low complexity. Residues K71 to E83 show a composition bias toward basic and acidic residues. A DNA-binding region (homeobox; WUS-type) is located at residues P86–Q150.

The protein belongs to the WUS homeobox family. In terms of tissue distribution, expressed in the vasculature of the whole plant (roots, hypocotyls, cotyledons and leaves), trichomes and stomata. Expresse in the developing vascular bundles of root and shoot lateral organs.

It localises to the nucleus. In terms of biological role, promotes differentiation and/or maintenance of the vascular procambium, the initial cells of the developing vasculature. Part of the TDIF-TDR-WOX4 signaling pathway that plays a crucial role in the maintenance of the vascular meristem organization during secondary growth. Is required for promoting the proliferation of procambial/cambial stem cells but not for repressing their commitment to xylem differentiation in response to the TDIF signal. Acts redundantly with WOX14 downstream of the TDR/PXY receptor kinase to regulate procambial cell proliferation and differentiation in vascular tissue, independently of any role in vascular. Acts as a cambium regulator in the inflorescence stem. Is required for auxin-dependent cambium stimulation in the inflorescence stem. This chain is WUSCHEL-related homeobox 4 (WOX4), found in Arabidopsis thaliana (Mouse-ear cress).